Reading from the N-terminus, the 516-residue chain is Melianol synthase CYP71BQ17 (516 aa).

The chain crosses the membrane as a helical span at residues 14–34 (MPHLPSLPVSLSFLLFFLMLV). Cys-454 contacts heme.

Belongs to the cytochrome P450 family. Heme serves as cofactor. Mainly expressed in roots and, to a lesser extent, in stems and old leaves.

It is found in the membrane. It catalyses the reaction dihydroniloticin + 2 reduced [NADPH--hemoprotein reductase] + 2 O2 = melianol + 2 oxidized [NADPH--hemoprotein reductase] + 3 H2O + 2 H(+). It participates in secondary metabolite biosynthesis; terpenoid biosynthesis. Monooxygenase involved in the biosynthesis of quassinoids triterpene natural products such as ailanthone, chaparrinone, glaucarubinone and amarolide, allelopathic degraded triterpene lactones inhibiting the growth of other plants, and possessing antimalarial, antifeedant, insecticidal, anti-inflammatory and anticancer activities. Catalyzes the conversion of dihydroniloticin to the protolimonoid melianol. The protein is Melianol synthase CYP71BQ17 of Ailanthus altissima (Tree-of-heaven).